The sequence spans 496 residues: Transmembrane transporter swnT (496 aa).

The next 5 helical transmembrane spans lie at leucine 40–leucine 60, valine 72–glutamate 92, alanine 124–leucine 144, tryptophan 162–glutamate 182, and alanine 191–alanine 211. Asparagine 225 carries an N-linked (GlcNAc...) asparagine glycan. Transmembrane regions (helical) follow at residues leucine 270–valine 290, alanine 314–isoleucine 334, proline 368–alanine 388, leucine 396–leucine 416, glycine 434–phenylalanine 454, and tyrosine 467–alanine 487.

The protein belongs to the amino acid-polyamine-organocation (APC) superfamily. Amino acid/choline transporter (ACT) (TC 2.A.3.4) family.

The protein resides in the membrane. Functionally, transmembrane transporter; part of the gene cluster that mediates the biosynthesis of swainsonine, a cytotoxic fungal alkaloid and a potential cancer therapy drug. Does not mediate the secretion of SW and the exact role of swnT in SW biosynthesis remains to be determined. The protein is Transmembrane transporter swnT of Metarhizium robertsii (strain ARSEF 23 / ATCC MYA-3075) (Metarhizium anisopliae (strain ARSEF 23)).